The sequence spans 122 residues: Large ribosomal subunit protein uL14 (122 aa).

The protein belongs to the universal ribosomal protein uL14 family. Part of the 50S ribosomal subunit. Forms a cluster with proteins L3 and L19. In the 70S ribosome, L14 and L19 interact and together make contacts with the 16S rRNA in bridges B5 and B8.

In terms of biological role, binds to 23S rRNA. Forms part of two intersubunit bridges in the 70S ribosome. The sequence is that of Large ribosomal subunit protein uL14 from Prosthecochloris aestuarii (strain DSM 271 / SK 413).